We begin with the raw amino-acid sequence, 35 residues long: Mu/omega-theraphotoxin-Tap1a (35 aa).

3 cysteine pairs are disulfide-bonded: C3/C18, C10/C23, and C17/C30.

This sequence belongs to the neurotoxin 10 (Hwtx-1) family. 59 (Tltx) subfamily. As to expression, expressed by the venom gland.

It localises to the secreted. Its function is as follows. Gating-modifier toxin that inhibits both sodium (Nav) and calcium (Cav3) channels by inducing hyperpolarizing shift in voltage-dependence of activation and steady state inactivation. Inhibits Nav1.1/SCN1A, Nav1.2/SCN2A, Nav1.3/SCN3A, Nav1.6/SCN6A, Nav1.7/SCN9A and Cav3.1/CACNA1G sodium and calcium channels at nanomolar concentrations (IC(50)=81-301 nM). Surprisingly, selectively slows fast inactivation of Nav1.3/SCN3A. Also shows moderate inhibition of Cav3.2/CACNA1H calcium channels (IC(50)=1233 nM). Ex vivo, nearly ablates neuronal mechanosensitivity in afferent fibers innervating the colon and the bladder. In vivo, in a mouse model of irritable bowel syndrome, intracolonic administration of the toxin reverses colonic mechanical hypersensitivity. In Theraphosa apophysis (Goliath pinkfoot tarantula), this protein is Mu/omega-theraphotoxin-Tap1a.